Reading from the N-terminus, the 1386-residue chain is X-linked retinitis pigmentosa GTPase regulator homolog (1386 aa).

3 disordered regions span residues 1–25 (MFFKRSTNSRKTSANSSSDTSTSSE), 37–56 (AGARSQKGSVHRQSGKKARR), and 730–760 (MPQMNAKSKRSDSVTNGAPTLPPPAPKPEQH). Residues 9 to 25 (SRKTSANSSSDTSTSSE) show a composition bias toward low complexity. The span at 45–56 (SVHRQSGKKARR) shows a compositional bias: basic residues. 4 RCC1 repeats span residues 737–787 (SKRS…VLSS), 788–838 (SGQL…FICS), 839–891 (DGSL…VLTD), and 893–943 (GRVL…CITE). The disordered stretch occupies residues 972–994 (LKNTEDPSSPSPSTNGSTPRVNL). RCC1 repeat units follow at residues 1034 to 1085 (EGTL…ASTD) and 1087 to 1139 (GSVF…FVQK).

In terms of biological role, could be a guanine-nucleotide releasing factor for glo-1. May play a role in gut granule biogenesis. Regulates axon termination in PLM and ALM neurons. The chain is X-linked retinitis pigmentosa GTPase regulator homolog (glo-4) from Caenorhabditis elegans.